We begin with the raw amino-acid sequence, 370 residues long: Cytoplasmic envelopment protein 2 (370 aa).

The protein belongs to the herpesviridae cytoplasmic envelopment protein 2 family. In terms of assembly, interacts with cytoplasmic envelopment protein 3 and with the capsid.

It localises to the virion tegument. Its subcellular location is the host cytoplasm. The protein localises to the host nucleus. Functionally, plays a critical role in cytoplasmic virus egress. Participates in the final step of tegumentation and envelope acquisition within the host cytoplasm by directly interacting with the capsid. Upon virion binding to target cell, a signaling cascade is triggered to disrupt the interaction with the capsid, thereby preparing capsid uncoating. The chain is Cytoplasmic envelopment protein 2 from Equine herpesvirus 1 (strain V592) (EHV-1).